The following is a 332-amino-acid chain: MKVGIIGASGYTGSELLRILANHPEAEVIAASSRRYEGQKIWKVHRFLKGFYDLEFCSPELSNFGDCDLVFTAVPHGEAMKYVPQLLDSGIKVVDISADYRLDKETYERVYGKKHEGYVEAVYGLTELHREEIKKANLVANPGCYPTGTILAASPLAKLELIERVVFDCKSGITGAGESPSAFTHYPNLHESIVPYKITEHRHYYEMVQELGRFQSDIKISFTPQVYPGSRGILTNAHVFLRGELTREELYRIYEEFYEDSFFVRIQESVSLSQVRGSNFCDISIHPGEDRVVVVSAIDNLVKGASGQAVQNMNLMMGFDETLGLRTPPLFP.

The active site involves C144.

This sequence belongs to the NAGSA dehydrogenase family. Type 1 subfamily.

It is found in the cytoplasm. It carries out the reaction N-acetyl-L-glutamate 5-semialdehyde + phosphate + NADP(+) = N-acetyl-L-glutamyl 5-phosphate + NADPH + H(+). Its pathway is amino-acid biosynthesis; L-arginine biosynthesis; N(2)-acetyl-L-ornithine from L-glutamate: step 3/4. Catalyzes the NADPH-dependent reduction of N-acetyl-5-glutamyl phosphate to yield N-acetyl-L-glutamate 5-semialdehyde. In Archaeoglobus fulgidus (strain ATCC 49558 / DSM 4304 / JCM 9628 / NBRC 100126 / VC-16), this protein is N-acetyl-gamma-glutamyl-phosphate reductase.